The sequence spans 321 residues: Serine/threonine-protein phosphatase PP1 isozyme 4 (321 aa).

A2 carries the post-translational modification N-acetylalanine. Positions 74, 76, 102, and 134 each coordinate Mn(2+). H135 (proton donor) is an active-site residue. H183 and H258 together coordinate Mn(2+).

This sequence belongs to the PPP phosphatase family. PP-1 subfamily. As to quaternary structure, interacts with the DELLA proteins RGA and GAI. Interacts with PIF3 and PIF5. Interacts with the auxin efflux carrier PIN1. Mn(2+) is required as a cofactor. Expressed in the vasculature of roots and cotyledons, tips of leaves, guard cells, bases of trichomes, pistils and stamen filaments.

It localises to the nucleus. The protein resides in the cytoplasm. The catalysed reaction is O-phospho-L-seryl-[protein] + H2O = L-seryl-[protein] + phosphate. The enzyme catalyses O-phospho-L-threonyl-[protein] + H2O = L-threonyl-[protein] + phosphate. Phosphatase activity is strongly reduced by the protein phosphatase inhibitor 2 (I-2). In terms of biological role, serine/threonine-protein phosphatase that possesses phosphatase activity toward para-nitrophenyl phosphate (pNPP) in vitro. Acts as a positive regulator in the gibberellin (GA) signaling pathway to regulate plant growth and development. Promotes the GA-induced and proteasomal-dependent degradation of the DELLA proteins RGA and GAI by directly binding and dephosphorylating these proteins. Involved in the regulation of phytochrome B (phyB) signaling pathway that controls photomorphogenesis. Promotes the proteasomal-dependent degradation of PIF5 factor by directly binding and dephosphorylating this protein. Involved in the regulation of pavement cell (PC) interdigitation by modulating the auxin efflux carrier PIN1 polarity and endocytic trafficking. Regulates PIN1 polar targeting through direct binding and dephosphorylation. Acts antagonistically with PID in regulating PC development. This Arabidopsis thaliana (Mouse-ear cress) protein is Serine/threonine-protein phosphatase PP1 isozyme 4.